Here is a 127-residue protein sequence, read N- to C-terminus: MPTINQLVRKGRITPEEKSKSRALHSCPQRRGVCLQVMTRTPKKPNSALRKVAKVRLTNGEEVIAYIGGEGHNLQEHSIVLVRGGRVKDLPGVRYHIVRGALDCLGVDKRRQGRSKYGAKRPKAAAK.

At Asp89 the chain carries 3-methylthioaspartic acid.

The protein belongs to the universal ribosomal protein uS12 family. Part of the 30S ribosomal subunit. Contacts proteins S8 and S17. May interact with IF1 in the 30S initiation complex.

Functionally, with S4 and S5 plays an important role in translational accuracy. In terms of biological role, interacts with and stabilizes bases of the 16S rRNA that are involved in tRNA selection in the A site and with the mRNA backbone. Located at the interface of the 30S and 50S subunits, it traverses the body of the 30S subunit contacting proteins on the other side and probably holding the rRNA structure together. The combined cluster of proteins S8, S12 and S17 appears to hold together the shoulder and platform of the 30S subunit. The chain is Small ribosomal subunit protein uS12 from Akkermansia muciniphila (strain ATCC BAA-835 / DSM 22959 / JCM 33894 / BCRC 81048 / CCUG 64013 / CIP 107961 / Muc).